The sequence spans 158 residues: Deoxyuridine 5'-triphosphate nucleotidohydrolase (158 aa).

Residues 75-77 (RSG), asparagine 88, 92-94 (TVD), and lysine 102 contribute to the substrate site.

The protein belongs to the dUTPase family. Requires Mg(2+) as cofactor.

The enzyme catalyses dUTP + H2O = dUMP + diphosphate + H(+). The protein operates within pyrimidine metabolism; dUMP biosynthesis; dUMP from dCTP (dUTP route): step 2/2. This enzyme is involved in nucleotide metabolism: it produces dUMP, the immediate precursor of thymidine nucleotides and it decreases the intracellular concentration of dUTP so that uracil cannot be incorporated into DNA. The chain is Deoxyuridine 5'-triphosphate nucleotidohydrolase from Bifidobacterium longum subsp. infantis (strain ATCC 15697 / DSM 20088 / JCM 1222 / NCTC 11817 / S12).